A 123-amino-acid chain; its full sequence is Large ribosomal subunit protein uL29 (123 aa).

Lysine 19 carries the N6-acetyllysine modification. Lysine 25 is covalently cross-linked (Glycyl lysine isopeptide (Lys-Gly) (interchain with G-Cter in SUMO2)). Serine 29 is modified (phosphoserine). Lysine 43 bears the N6-acetyllysine mark.

The protein belongs to the universal ribosomal protein uL29 family. In terms of assembly, component of the large ribosomal subunit.

The protein localises to the cytoplasm. Its function is as follows. Component of the large ribosomal subunit. The ribosome is a large ribonucleoprotein complex responsible for the synthesis of proteins in the cell. This chain is Large ribosomal subunit protein uL29 (RPL35), found in Sus scrofa (Pig).